Reading from the N-terminus, the 103-residue chain is UPF0122 protein FN1394 (103 aa).

The protein belongs to the UPF0122 family.

Functionally, might take part in the signal recognition particle (SRP) pathway. This is inferred from the conservation of its genetic proximity to ftsY/ffh. May be a regulatory protein. The chain is UPF0122 protein FN1394 from Fusobacterium nucleatum subsp. nucleatum (strain ATCC 25586 / DSM 15643 / BCRC 10681 / CIP 101130 / JCM 8532 / KCTC 2640 / LMG 13131 / VPI 4355).